The chain runs to 293 residues: Small ribosomal subunit biogenesis GTPase RsgA 2 (293 aa).

A CP-type G domain is found at 63–223 (SNELVRPPIA…VADTPGFSVL (161 aa)). Residues 112 to 115 (TKVD) and 166 to 174 (GQSGVGKSS) each bind GTP. The Zn(2+) site is built by Cys247, Cys252, His254, and Cys260.

This sequence belongs to the TRAFAC class YlqF/YawG GTPase family. RsgA subfamily. Monomer. Associates with 30S ribosomal subunit, binds 16S rRNA. Requires Zn(2+) as cofactor.

The protein resides in the cytoplasm. One of several proteins that assist in the late maturation steps of the functional core of the 30S ribosomal subunit. Helps release RbfA from mature subunits. May play a role in the assembly of ribosomal proteins into the subunit. Circularly permuted GTPase that catalyzes slow GTP hydrolysis, GTPase activity is stimulated by the 30S ribosomal subunit. The sequence is that of Small ribosomal subunit biogenesis GTPase RsgA 2 from Oceanobacillus iheyensis (strain DSM 14371 / CIP 107618 / JCM 11309 / KCTC 3954 / HTE831).